A 75-amino-acid polypeptide reads, in one-letter code: Protein SlyX homolog (75 aa).

The protein belongs to the SlyX family.

The chain is Protein SlyX homolog from Vibrio vulnificus (strain CMCP6).